A 309-amino-acid polypeptide reads, in one-letter code: Thermolabile glutaminase (309 aa).

Substrate is bound by residues serine 64, asparagine 114, glutamate 160, asparagine 167, tyrosine 191, tyrosine 243, and valine 261.

Belongs to the glutaminase family. Homotetramer.

It carries out the reaction L-glutamine + H2O = L-glutamate + NH4(+). In Rhizobium etli (strain ATCC 51251 / DSM 11541 / JCM 21823 / NBRC 15573 / CFN 42), this protein is Thermolabile glutaminase (glsA).